Consider the following 451-residue polypeptide: Multidrug export protein MepA (451 aa).

12 consecutive transmembrane segments (helical) span residues 26–46, 54–74, 97–117, 139–159, 170–190, 194–214, 245–265, 282–302, 318–338, 355–375, 397–417, and 418–438; these read MIGT…IGFL, AISL…LFGV, SFSI…ALPF, LKVM…EQFA, IGML…IFGF, VVGA…FFII, IPAF…NLFL, LVQF…PLIA, AVIM…FTIG, ATFI…GFLF, VVII…GVIW, and SLLI…YLLR.

It belongs to the multi antimicrobial extrusion (MATE) (TC 2.A.66.1) family. MepA subfamily.

The protein resides in the cell membrane. In terms of biological role, multidrug resistance efflux protein. The protein is Multidrug export protein MepA (mepA) of Staphylococcus aureus (strain MRSA252).